The following is an 855-amino-acid chain: Inactive rhomboid protein 1 (855 aa).

The disordered stretch occupies residues 1–35 (MSEARRDSTSSLQRKKPPWLKLDIPSAAPATAEEP). Topologically, residues 1 to 411 (MSEARRDSTS…HRPFFTYWLT (411 aa)) are cytoplasmic. The segment covering 25-35 (PSAAPATAEEP) has biased composition (low complexity). Phosphoserine is present on residues Ser-76 and Ser-176. Residues Thr-180 and Thr-183 each carry the phosphothreonine modification. Ser-390 bears the Phosphoserine mark. A helical transmembrane segment spans residues 412-432 (FVHSLVTILAVCIYGIAPVGF). Topologically, residues 433-655 (SQHETVDSVL…NPEVPDQFYR (223 aa)) are lumenal. Residue Asn-583 is glycosylated (N-linked (GlcNAc...) asparagine). Residues 656 to 676 (LWLSLFLHAGILHCLVSICFQ) form a helical membrane-spanning segment. Over 677-691 (MTVLRDLEKLAGWHR) the chain is Cytoplasmic. Residues 692-712 (IAIIYLLSGVTGNLASAIFLP) form a helical membrane-spanning segment. Topologically, residues 713 to 714 (YR) are lumenal. A helical transmembrane segment spans residues 715–735 (AEVGPAGSQFGILACLFVELF). Residues 736–746 (QSWQILARPWR) lie on the Cytoplasmic side of the membrane. Residues 747 to 767 (AFFKLLAVVLFLFTFGLLPWI) form a helical membrane-spanning segment. Over 768–772 (DNFAH) the chain is Lumenal. The chain crosses the membrane as a helical span at residues 773 to 793 (ISGFISGLFLSFAFLPYISFG). Over 794–803 (KFDLYRKRCQ) the chain is Cytoplasmic. The helical transmembrane segment at 804–824 (IIVFQVVFLGLLAGLVVLFYV) threads the bilayer. Residues 825-855 (YPVRCEWCEFLTCIPFTDKFCEKYELDAQLH) are Lumenal-facing.

The protein belongs to the peptidase S54 family. As to quaternary structure, homodimer, or homooligomer. Interacts with TGFA and HBEGF. Interacts with EGF; may retain EGF in the endoplasmic reticulum and regulates its degradation through the endoplasmic reticulum-associated degradation (ERAD). Interacts (via cytoplasmic N-terminus) with FRMD8/iTAP; this interaction leads to mutual protein stabilization. Interacts with ADAM17/TACE.

The protein resides in the endoplasmic reticulum membrane. It is found in the golgi apparatus membrane. Regulates ADAM17 protease, a sheddase of the epidermal growth factor (EGF) receptor ligands and TNF, thereby plays a role in sleep, cell survival, proliferation, migration and inflammation. Does not exhibit any protease activity on its own. The chain is Inactive rhomboid protein 1 (RHBDF1) from Callithrix jacchus (White-tufted-ear marmoset).